A 20-amino-acid polypeptide reads, in one-letter code: L-amino-acid oxidase L2 (20 aa).

It belongs to the flavin monoamine oxidase family. FIG1 subfamily. In terms of assembly, monomer. This is in contrast with most of its orthologs, that are non-covalently linked homodimers. Requires FAD as cofactor. Post-translationally, N-glycosylated. In terms of tissue distribution, expressed by the venom gland.

The protein resides in the secreted. It catalyses the reaction an L-alpha-amino acid + O2 + H2O = a 2-oxocarboxylate + H2O2 + NH4(+). The catalysed reaction is L-leucine + O2 + H2O = 4-methyl-2-oxopentanoate + H2O2 + NH4(+). The enzyme catalyses L-phenylalanine + O2 + H2O = 3-phenylpyruvate + H2O2 + NH4(+). It carries out the reaction L-tryptophan + O2 + H2O = indole-3-pyruvate + H2O2 + NH4(+). It catalyses the reaction L-methionine + O2 + H2O = 4-methylsulfanyl-2-oxobutanoate + H2O2 + NH4(+). The catalysed reaction is L-isoleucine + O2 + H2O = (S)-3-methyl-2-oxopentanoate + H2O2 + NH4(+). The enzyme catalyses L-tyrosine + O2 + H2O = 3-(4-hydroxyphenyl)pyruvate + H2O2 + NH4(+). Functionally, catalyzes an oxidative deamination of predominantly hydrophobic and aromatic L-amino acids, thus producing hydrogen peroxide that may contribute to the diverse toxic effects of this enzyme. Is active on L-Ile, L-Leu, L-Met, L-Phe, L-Trp, and L-Tyr. Exhibits diverse biological activities, such as hemorrhage, hemolysis, edema, apoptosis of vascular endothelial cells or tumor cell lines, antibacterial and antiparasitic activities, as well as regulation of platelet aggregation. Its effect on platelets is controversial, since it either induces aggregation or inhibits agonist-induced aggregation. These different effects are probably due to different experimental conditions. This chain is L-amino-acid oxidase L2, found in Daboia russelii (Russel's viper).